Reading from the N-terminus, the 238-residue chain is Ribitol-5-phosphate cytidylyltransferase 1 (238 aa).

Residues 7–10 and 81–87 each bind CTP; these read LAGG and GSDRNDT.

Belongs to the IspD/TarI cytidylyltransferase family. TarI subfamily.

It catalyses the reaction D-ribitol 5-phosphate + CTP + H(+) = CDP-L-ribitol + diphosphate. Its pathway is cell wall biogenesis; poly(ribitol phosphate) teichoic acid biosynthesis. Functionally, catalyzes the transfer of the cytidylyl group of CTP to D-ribitol 5-phosphate. This Staphylococcus aureus (strain USA300) protein is Ribitol-5-phosphate cytidylyltransferase 1.